Here is a 213-residue protein sequence, read N- to C-terminus: uncharacterized protein (213 aa).

A helical transmembrane segment spans residues 22-42 (WFGLSMVSIAVIFGPLTGAHV). An NPA 1 motif is present at residues 43-45 (NPA). The next 3 membrane-spanning stretches (helical) occupy residues 63 to 83 (VYII…WLLF), 112 to 132 (NLLS…TLNH), and 138 to 158 (GVAM…FGGL). The NPA 2 signature appears at 164–166 (NPA). The chain crosses the membrane as a helical span at residues 188 to 208 (FDYAWVPVLRPVIGAILAAWL).

This sequence belongs to the MIP/aquaporin (TC 1.A.8) family.

It is found in the cell membrane. This is an uncharacterized protein from Haemophilus influenzae (strain ATCC 51907 / DSM 11121 / KW20 / Rd).